The sequence spans 305 residues: Protoheme IX farnesyltransferase (305 aa).

9 helical membrane-spanning segments follow: residues 29–49, 55–75, 101–121, 123–143, 151–171, 177–197, 219–241, 246–268, and 283–303; these read LIVF…PGLA, LWAT…NCLI, ALIF…EAVN, LTAW…TVVL, IVIG…AMTG, GLIL…ALAL, FTRL…PFVQ, WLYL…RLWR, and IWHL…QDLL.

This sequence belongs to the UbiA prenyltransferase family. Protoheme IX farnesyltransferase subfamily.

It is found in the cell inner membrane. The catalysed reaction is heme b + (2E,6E)-farnesyl diphosphate + H2O = Fe(II)-heme o + diphosphate. It functions in the pathway porphyrin-containing compound metabolism; heme O biosynthesis; heme O from protoheme: step 1/1. Its function is as follows. Converts heme B (protoheme IX) to heme O by substitution of the vinyl group on carbon 2 of heme B porphyrin ring with a hydroxyethyl farnesyl side group. The polypeptide is Protoheme IX farnesyltransferase (Leptothrix cholodnii (strain ATCC 51168 / LMG 8142 / SP-6) (Leptothrix discophora (strain SP-6))).